The sequence spans 824 residues: 4-methylaminobutanoate oxidase (formaldehyde-forming) (824 aa).

Position 67 is a pros-8alpha-FAD histidine (H67).

This sequence belongs to the GcvT family. FAD is required as a cofactor.

It carries out the reaction 4-(methylamino)butanoate + O2 + H2O = 4-aminobutanoate + formaldehyde + H2O2. It functions in the pathway alkaloid degradation; nicotine degradation. In terms of biological role, catalyzes the oxidative demethylation of 4-methylaminobutanoate produced from the pyrrolidine ring of nicotine. To a much lesser extent, can also use sarcosine as substrate, but is not active against dimethylglycine, methylaminopropionitrile, methylaminopropylamine, and alpha-methylaminobutanoate. The sequence is that of 4-methylaminobutanoate oxidase (formaldehyde-forming) (abo) from Paenarthrobacter nicotinovorans (Arthrobacter nicotinovorans).